The following is a 418-amino-acid chain: Serine hydroxymethyltransferase (418 aa).

Residues Leu-121 and 125 to 127 (GHL) each bind (6S)-5,6,7,8-tetrahydrofolate. Lys-230 carries the N6-(pyridoxal phosphate)lysine modification. 355 to 357 (SPF) lines the (6S)-5,6,7,8-tetrahydrofolate pocket.

This sequence belongs to the SHMT family. Homodimer. Requires pyridoxal 5'-phosphate as cofactor.

Its subcellular location is the cytoplasm. It carries out the reaction (6R)-5,10-methylene-5,6,7,8-tetrahydrofolate + glycine + H2O = (6S)-5,6,7,8-tetrahydrofolate + L-serine. It functions in the pathway one-carbon metabolism; tetrahydrofolate interconversion. Its pathway is amino-acid biosynthesis; glycine biosynthesis; glycine from L-serine: step 1/1. Its function is as follows. Catalyzes the reversible interconversion of serine and glycine with tetrahydrofolate (THF) serving as the one-carbon carrier. This reaction serves as the major source of one-carbon groups required for the biosynthesis of purines, thymidylate, methionine, and other important biomolecules. Also exhibits THF-independent aldolase activity toward beta-hydroxyamino acids, producing glycine and aldehydes, via a retro-aldol mechanism. The polypeptide is Serine hydroxymethyltransferase (Streptococcus pyogenes serotype M18 (strain MGAS8232)).